Here is a 119-residue protein sequence, read N- to C-terminus: Large ribosomal subunit protein bL19 (119 aa).

It belongs to the bacterial ribosomal protein bL19 family.

Its function is as follows. This protein is located at the 30S-50S ribosomal subunit interface and may play a role in the structure and function of the aminoacyl-tRNA binding site. This is Large ribosomal subunit protein bL19 from Pseudarthrobacter chlorophenolicus (strain ATCC 700700 / DSM 12829 / CIP 107037 / JCM 12360 / KCTC 9906 / NCIMB 13794 / A6) (Arthrobacter chlorophenolicus).